A 180-amino-acid chain; its full sequence is Photosystem II extrinsic protein V (180 aa).

Residues 1–40 (MFSKAFSFQKVFAPARRRLLVLLLAALMAGFGWGLAPVFA) form the signal peptide. Heme c-binding residues include Cys73, Cys76, His77, and His128.

Belongs to the cytochrome c family. PsbV subfamily. PSII is composed of 1 copy each of membrane proteins PsbA, PsbB, PsbC, PsbD, PsbE, PsbF, PsbH, PsbI, PsbJ, PsbK, PsbL, PsbM, PsbT, PsbX, PsbY, PsbZ, Psb30/Ycf12, peripheral proteins PsbO, CyanoQ (PsbQ), PsbU, PsbV and a large number of cofactors. It forms dimeric complexes. Heme c is required as a cofactor.

It localises to the cellular thylakoid membrane. Its function is as follows. One of the extrinsic, lumenal subunits of photosystem II (PSII). PSII is a light-driven water plastoquinone oxidoreductase, using light energy to abstract electrons from H(2)O, generating a proton gradient subsequently used for ATP formation. The extrinsic proteins stabilize the structure of photosystem II oxygen-evolving complex (OEC), the ion environment of oxygen evolution and protect the OEC against heat-induced inactivation. Low-potential cytochrome c that plays a role in the OEC of PSII. The chain is Photosystem II extrinsic protein V from Synechococcus sp. (strain JA-2-3B'a(2-13)) (Cyanobacteria bacterium Yellowstone B-Prime).